Consider the following 106-residue polypeptide: Small ribosomal subunit protein bS18 (106 aa).

Residues 1 to 32 are disordered; sequence MRWMKIMSEDMKQEQSGEGRGGRGGPARPLAS. Positions 7 to 21 are enriched in basic and acidic residues; it reads MSEDMKQEQSGEGRG.

Belongs to the bacterial ribosomal protein bS18 family. In terms of assembly, part of the 30S ribosomal subunit. Forms a tight heterodimer with protein bS6.

Binds as a heterodimer with protein bS6 to the central domain of the 16S rRNA, where it helps stabilize the platform of the 30S subunit. The sequence is that of Small ribosomal subunit protein bS18 from Magnetococcus marinus (strain ATCC BAA-1437 / JCM 17883 / MC-1).